We begin with the raw amino-acid sequence, 590 residues long: Arginine--tRNA ligase (590 aa).

A 'HIGH' region motif is present at residues 138–148 (ANPTGPLHIGH).

The protein belongs to the class-I aminoacyl-tRNA synthetase family. Monomer.

It is found in the cytoplasm. The enzyme catalyses tRNA(Arg) + L-arginine + ATP = L-arginyl-tRNA(Arg) + AMP + diphosphate. The polypeptide is Arginine--tRNA ligase (Orientia tsutsugamushi (strain Boryong) (Rickettsia tsutsugamushi)).